The chain runs to 193 residues: Putative nitroreductase HBN1 (193 aa).

Serine 2 is modified (N-acetylserine).

The protein belongs to the nitroreductase family. FMN serves as cofactor.

The protein resides in the cytoplasm. It is found in the nucleus. This chain is Putative nitroreductase HBN1 (HBN1), found in Saccharomyces cerevisiae (strain ATCC 204508 / S288c) (Baker's yeast).